We begin with the raw amino-acid sequence, 242 residues long: Large ribosomal subunit protein uL1 (242 aa).

The protein belongs to the universal ribosomal protein uL1 family. Part of the 50S ribosomal subunit.

Binds directly to 23S rRNA. The L1 stalk is quite mobile in the ribosome, and is involved in E site tRNA release. Functionally, protein L1 is also a translational repressor protein, it controls the translation of the L11 operon by binding to its mRNA. This chain is Large ribosomal subunit protein uL1, found in Wigglesworthia glossinidia brevipalpis.